The chain runs to 217 residues: MNSIRQIERLNEQELDKPFSSSWHQDYSDSAYIYIGNLDFDLNEDDILCVFSEFGEPVDINLVRDKETGKSKGFAFLKYEDQRSTVLAVDNMTNVKLLDRLVRVDHVASYKVPQKEKEPANLVPLGESGSSLSVSTINTSNLPDHDYKTIIQNEVEQTLSPKDEKDLLDPMRDYIHREKRRKLKHESSDRSDKSDSNRHSRHHRRHSRSRRHRDLDG.

Residues 31–109 (AYIYIGNLDF…RLVRVDHVAS (79 aa)) form the RRM domain. 2 disordered regions span residues 119-138 (PANLVPLGESGSSLSVSTIN) and 154-217 (EVEQ…DLDG). The span at 128–138 (SGSSLSVSTIN) shows a compositional bias: polar residues. Residue Ser160 is modified to Phosphoserine. Basic and acidic residues-rich tracts occupy residues 161–176 (PKDEKDLLDPMRDYIH) and 185–198 (HESSDRSDKSDSNR). Residues 199 to 217 (HSRHHRRHSRSRRHRDLDG) are compositionally biased toward basic residues.

The protein belongs to the IST3 family. In terms of assembly, belongs to the 40S cdc5-associated complex (or cwf complex), a spliceosome sub-complex reminiscent of a late-stage spliceosome composed of the U2, U5 and U6 snRNAs and at least brr2, cdc5, cwf2/prp3, cwf3/syf1, cwf4/syf3, cwf5/ecm2, spp42/cwf6, cwf7/spf27, cwf8, cwf9, cwf10, cwf11, cwf12, prp45/cwf13, cwf14, cwf15, cwf16, cwf17, cwf18, cwf19, cwf20, cwf21, cwf22, cwf23, cwf24, cwf25, cwf26, cyp7/cwf27, cwf28, cwf29/ist3, lea1, msl1, prp5/cwf1, prp10, prp12/sap130, prp17, prp22, sap61, sap62, sap114, sap145, slu7, smb1, smd1, smd3, smf1, smg1 and syf2.

It is found in the nucleus. Functionally, required for pre-mRNA splicing and spliceosome assembly. The protein is U2 snRNP component ist3 (cwf29) of Schizosaccharomyces pombe (strain 972 / ATCC 24843) (Fission yeast).